The sequence spans 311 residues: Aspartate carbamoyltransferase catalytic subunit (311 aa).

The carbamoyl phosphate site is built by R55 and T56. L-aspartate is bound at residue K85. Carbamoyl phosphate is bound by residues R106, H135, and Q138. Residues R168 and R230 each coordinate L-aspartate. Positions 268 and 269 each coordinate carbamoyl phosphate.

It belongs to the aspartate/ornithine carbamoyltransferase superfamily. ATCase family. Heterododecamer (2C3:3R2) of six catalytic PyrB chains organized as two trimers (C3), and six regulatory PyrI chains organized as three dimers (R2).

The catalysed reaction is carbamoyl phosphate + L-aspartate = N-carbamoyl-L-aspartate + phosphate + H(+). Its pathway is pyrimidine metabolism; UMP biosynthesis via de novo pathway; (S)-dihydroorotate from bicarbonate: step 2/3. Functionally, catalyzes the condensation of carbamoyl phosphate and aspartate to form carbamoyl aspartate and inorganic phosphate, the committed step in the de novo pyrimidine nucleotide biosynthesis pathway. This Yersinia pestis protein is Aspartate carbamoyltransferase catalytic subunit.